The primary structure comprises 516 residues: Gamma-aminobutyrate transaminase 1, mitochondrial (516 aa).

The transit peptide at 1-47 (MVIARGLLRSNASSSSSQAINLLKYVTSTGSLQGHTQNLCDASTRHF) directs the protein to the mitochondrion. 171–172 (GS) is a pyridoxal 5'-phosphate binding site. Residue Tyr204 participates in substrate binding. Asp311 contributes to the pyridoxal 5'-phosphate binding site. Lys340 contributes to the substrate binding site. Lys340 is subject to N6-(pyridoxal phosphate)lysine.

Belongs to the class-III pyridoxal-phosphate-dependent aminotransferase family. Expressed in roots, stems and panicles.

Its subcellular location is the mitochondrion. It carries out the reaction 4-aminobutanoate + pyruvate = succinate semialdehyde + L-alanine. It catalyses the reaction 4-aminobutanoate + glyoxylate = succinate semialdehyde + glycine. Its function is as follows. Transaminase that degrades gamma-amino butyric acid (GABA) and uses pyruvate as amino-group acceptor, but not 2-oxoglutarate. Not involved in the interaction with blast fungus. The polypeptide is Gamma-aminobutyrate transaminase 1, mitochondrial (OSL2) (Oryza sativa subsp. japonica (Rice)).